A 114-amino-acid chain; its full sequence is MSNIITEITKSQLRTDLPAFRPGDTVKVHVKVVEGTRERIQLFEGVVIKRRGGGISETFTVRKISYGVGVERTFPVHTPKIANLEVVRRGKVRRAKLYYLRNLRGKAARIKEIR.

Belongs to the bacterial ribosomal protein bL19 family.

This protein is located at the 30S-50S ribosomal subunit interface and may play a role in the structure and function of the aminoacyl-tRNA binding site. The sequence is that of Large ribosomal subunit protein bL19 from Lysinibacillus sphaericus (strain C3-41).